The chain runs to 379 residues: L-lactate dehydrogenase (379 aa).

Positions 1–379 (MIISSSTDYR…ITSELLVREP (379 aa)) constitute an FMN hydroxy acid dehydrogenase domain. Tyr24 contributes to the substrate binding site. Positions 106 and 127 each coordinate FMN. Tyr129 serves as a coordination point for substrate. Thr155 is an FMN binding site. Arg164 lines the substrate pocket. Lys251 is an FMN binding site. His275 acts as the Proton acceptor in catalysis. Position 278 (Arg278) interacts with substrate. 306 to 330 (DSGIRSGLDVVRMIALGADAAMLGR) serves as a coordination point for FMN.

The protein belongs to the FMN-dependent alpha-hydroxy acid dehydrogenase family. FMN serves as cofactor.

The protein resides in the cell membrane. The catalysed reaction is (S)-lactate + A = pyruvate + AH2. Its function is as follows. Catalyzes the conversion of L-lactate to pyruvate. Is coupled to the respiratory chain. This is L-lactate dehydrogenase from Alcaligenes faecalis.